Consider the following 346-residue polypeptide: Biotin synthase (346 aa).

Polar residues predominate over residues Met-1–Glu-12. Residues Met-1–Ala-21 are disordered. In terms of domain architecture, Radical SAM core spans Asn-64 to Arg-292. The [4Fe-4S] cluster site is built by Cys-79, Cys-83, and Cys-86. Residues Cys-123, Cys-155, Cys-215, and Arg-287 each coordinate [2Fe-2S] cluster.

Belongs to the radical SAM superfamily. Biotin synthase family. As to quaternary structure, homodimer. [4Fe-4S] cluster is required as a cofactor. Requires [2Fe-2S] cluster as cofactor.

The enzyme catalyses (4R,5S)-dethiobiotin + (sulfur carrier)-SH + 2 reduced [2Fe-2S]-[ferredoxin] + 2 S-adenosyl-L-methionine = (sulfur carrier)-H + biotin + 2 5'-deoxyadenosine + 2 L-methionine + 2 oxidized [2Fe-2S]-[ferredoxin]. The protein operates within cofactor biosynthesis; biotin biosynthesis; biotin from 7,8-diaminononanoate: step 2/2. Catalyzes the conversion of dethiobiotin (DTB) to biotin by the insertion of a sulfur atom into dethiobiotin via a radical-based mechanism. The protein is Biotin synthase of Myxococcus xanthus (strain DK1622).